Here is a 202-residue protein sequence, read N- to C-terminus: Glycerol-3-phosphate acyltransferase (202 aa).

6 helical membrane passes run 3–23 (NLII…LILA), 61–81 (IATI…LKFL), 87–107 (LLWS…YLLF), 118–138 (GAMI…WVVI), 144–164 (ISSL…FIFN), and 167–187 (LEIH…YKHL).

This sequence belongs to the PlsY family. Probably interacts with PlsX.

The protein resides in the cell inner membrane. The catalysed reaction is an acyl phosphate + sn-glycerol 3-phosphate = a 1-acyl-sn-glycero-3-phosphate + phosphate. It functions in the pathway lipid metabolism; phospholipid metabolism. Catalyzes the transfer of an acyl group from acyl-phosphate (acyl-PO(4)) to glycerol-3-phosphate (G3P) to form lysophosphatidic acid (LPA). This enzyme utilizes acyl-phosphate as fatty acyl donor, but not acyl-CoA or acyl-ACP. The protein is Glycerol-3-phosphate acyltransferase of Campylobacter jejuni subsp. jejuni serotype O:6 (strain 81116 / NCTC 11828).